Consider the following 881-residue polypeptide: Valine--tRNA ligase (881 aa).

The short motif at 42 to 52 (PNITGDLHVGH) is the 'HIGH' region element. Residues 554–558 (KMSKS) carry the 'KMSKS' region motif. Residue K557 participates in ATP binding.

Belongs to the class-I aminoacyl-tRNA synthetase family. ValS type 1 subfamily. In terms of assembly, monomer.

The protein localises to the cytoplasm. The catalysed reaction is tRNA(Val) + L-valine + ATP = L-valyl-tRNA(Val) + AMP + diphosphate. In terms of biological role, catalyzes the attachment of valine to tRNA(Val). As ValRS can inadvertently accommodate and process structurally similar amino acids such as threonine, to avoid such errors, it has a 'posttransfer' editing activity that hydrolyzes mischarged Thr-tRNA(Val) in a tRNA-dependent manner. This is Valine--tRNA ligase from Wigglesworthia glossinidia brevipalpis.